We begin with the raw amino-acid sequence, 1659 residues long: Fatty acid synthase subunit alpha (1659 aa).

Residues 114–139 form a disordered region; it reads TQAQASGGAGTIAGAGSSTAPVTAPP. The Carrier domain maps to 160 to 235; the sequence is AQAFEIVRTL…AALQKTFTGQ (76 aa). The residue at position 195 (S195) is an O-(pantetheine 4'-phosphoryl)serine. Residues 588-826 form a ketoreductase (KR) domain region; sequence GRSVLITGAG…LCLMFNTMCS (239 aa). A Ketosynthase family 3 (KS3) domain is found at 1030–1575; sequence KQLLHEVLIQ…QKGAQTIVVH (546 aa). Residues C1217, H1458, and H1499 each act as for beta-ketoacyl synthase activity in the active site. The tract at residues 1631–1659 is disordered; that stretch reads ETLLDPTPPQTNVDDRVARSIVQQESAEP.

This sequence belongs to the thiolase-like superfamily. Fungal fatty acid synthetase subunit alpha family. [Alpha(6)beta(6)] hexamers of two multifunctional subunits (alpha and beta). Post-translationally, 4'-phosphopantetheine is transferred from CoA to a specific serine of the acyl carrier domain by the C-terminal PPT domain. This modification is essential for activity because fatty acids are bound in thioester linkage to the sulfhydryl of the prosthetic group.

The catalysed reaction is acetyl-CoA + n malonyl-CoA + 2n NADPH + 4n H(+) = a long-chain-acyl-CoA + n CoA + n CO2 + 2n NADP(+).. It carries out the reaction a fatty acyl-[ACP] + malonyl-[ACP] + H(+) = a 3-oxoacyl-[ACP] + holo-[ACP] + CO2. The enzyme catalyses a (3R)-hydroxyacyl-[ACP] + NADP(+) = a 3-oxoacyl-[ACP] + NADPH + H(+). Its pathway is secondary metabolite biosynthesis. Fatty acid synthase subunit alpha; part of the gene cluster that mediates the biosynthesis of aspercryptins, linear lipopeptides built from six amino acids including 2 highly unusual and nonproteogenic amino acids, 2-amino-octanoic acid (2aoa) and 2-amino-dodecanol (2adol). The core structure of aspercryptins is as follows: Ser/Ala-Thr-Ile/Val-2aoa-Asn-2adol. The first step of aspercryptin biosynthesis is the generation of the fatty acid precursors, octanoic and dodecanoic acids, by the FAS subunits atnF and atnM. The fatty acid precursors are likely transformed into the corresponding alpha-amino fatty acids in three steps. First, they are hydroxylated by the cytochrome P450 monooxygenase atnE, then oxidized to the corresponding alpha-keto acids by the NAD(P)-dependent oxidoreductase atnD, and finally converted to the alpha-amino fatty acids by the PLP-dependent aminotransferases atnH or atnJ. the alpha-amino fatty acids, 2-amino-octanoic and 2-amino-dodecanoic acids, are recognized, activated, and covalently tethered to the NRPS atnA by its fourth and sixth adenylation domains. The second module of atnA is the Thr module and contains an epimerase (E) domain responsible for the epimerization of Thr to D-allo-Thr. Additionally, despite atnA having only one epimerase domain, the first amino acid of aspercryptin A1 is D-Ser, suggesting that serine is either loaded directly as D-Ser on the first module or that the epimerase domain in the threonine module epimerizes both L-Ser and L-Thr. After condensation of the hexapeptide of aspercryptin, the C-terminal reductase (TE) domain might be involved in the reductive release and production of the aldehyde hexapeptide. Further reduction would generate aspercryptins. The variety of aspercryptins produced reflects the flexibility of the atnA NRPS, allowing incorporation of alanine instead of serine, valine for isoleucine, and a C10 fatty amino alcohol instead of the C12 version. AtnB seems to be involved in the selectivity for Ile versus Val by the third module. Moreover, type B, C and D aspercryptins have an additional N-terminal cichorine, acetyl and propionyl group respectively. This Emericella nidulans (strain FGSC A4 / ATCC 38163 / CBS 112.46 / NRRL 194 / M139) (Aspergillus nidulans) protein is Fatty acid synthase subunit alpha.